Consider the following 89-residue polypeptide: Small ribosomal subunit protein uS15 (89 aa).

The protein belongs to the universal ribosomal protein uS15 family. Part of the 30S ribosomal subunit. Forms a bridge to the 50S subunit in the 70S ribosome, contacting the 23S rRNA.

Functionally, one of the primary rRNA binding proteins, it binds directly to 16S rRNA where it helps nucleate assembly of the platform of the 30S subunit by binding and bridging several RNA helices of the 16S rRNA. In terms of biological role, forms an intersubunit bridge (bridge B4) with the 23S rRNA of the 50S subunit in the ribosome. The chain is Small ribosomal subunit protein uS15 from Cupriavidus pinatubonensis (strain JMP 134 / LMG 1197) (Cupriavidus necator (strain JMP 134)).